The primary structure comprises 508 residues: MAGAFDFDLEKNPPVVQSTADNSSDGAVPGETFTYGDSTYAKIQRLAAELNIEQRGIERVPAAEQTDTSVFNIGSMWLAANMVVSSFAIGVLGKSVYSLGFVDAILTVLFFNLLGIMTVCFFSCFGPFGLRQMVFSRLWFGWYVTKGFAVLNILACLGWSAANAIVGAQMLHAVNSDVPGFAAILIISICTLLVTFAGYKVVHLYEYWSWIPTFIVFMIILGTFAHSGDFQNIPMGVGTSEMGSVLSFGSAVYGFATGWTSYAADYTVYQPANRSKRKIFLSTWLGLIVPLLFVEMLGVAVMTATDIKGSKYDVGYATSGNGGLIAAVLQPLGGFGDFCLVILALSIVANNCPNFYSVALTVQVLSRYAQRVPRFIWTLFGTGVSIAIAIPGYSHFETVLENFMNFIAYWLAIYSAIAIMDHFVFKRGFSGYVVENFDKREKLPVGIAATIAFGFGVAGMITGMSQPWYVGPIARHAAGGDVGFELGFAFAAFSYLCLRPFEIKFFGR.

The Cytoplasmic segment spans residues 1 to 72 (MAGAFDFDLE…AEQTDTSVFN (72 aa)). The helical transmembrane segment at 73-93 (IGSMWLAANMVVSSFAIGVLG) threads the bilayer. At 94-104 (KSVYSLGFVDA) the chain is on the extracellular side. A helical membrane pass occupies residues 105-125 (ILTVLFFNLLGIMTVCFFSCF). Topologically, residues 126–147 (GPFGLRQMVFSRLWFGWYVTKG) are cytoplasmic. Residues 148 to 168 (FAVLNILACLGWSAANAIVGA) traverse the membrane as a helical segment. The Extracellular portion of the chain corresponds to 169–177 (QMLHAVNSD). A helical membrane pass occupies residues 178–198 (VPGFAAILIISICTLLVTFAG). The Cytoplasmic portion of the chain corresponds to 199–200 (YK). The chain crosses the membrane as a helical span at residues 201-221 (VVHLYEYWSWIPTFIVFMIIL). The Extracellular portion of the chain corresponds to 222–243 (GTFAHSGDFQNIPMGVGTSEMG). The helical transmembrane segment at 244 to 264 (SVLSFGSAVYGFATGWTSYAA) threads the bilayer. Over 265 to 278 (DYTVYQPANRSKRK) the chain is Cytoplasmic. The chain crosses the membrane as a helical span at residues 279–299 (IFLSTWLGLIVPLLFVEMLGV). Over 300–323 (AVMTATDIKGSKYDVGYATSGNGG) the chain is Extracellular. Residues 324-344 (LIAAVLQPLGGFGDFCLVILA) form a helical membrane-spanning segment. At 345 to 374 (LSIVANNCPNFYSVALTVQVLSRYAQRVPR) the chain is on the cytoplasmic side. A helical membrane pass occupies residues 375 to 395 (FIWTLFGTGVSIAIAIPGYSH). Over 396–404 (FETVLENFM) the chain is Extracellular. A helical membrane pass occupies residues 405 to 425 (NFIAYWLAIYSAIAIMDHFVF). The Cytoplasmic segment spans residues 426–442 (KRGFSGYVVENFDKREK). Residues 443-463 (LPVGIAATIAFGFGVAGMITG) form a helical membrane-spanning segment. The Extracellular portion of the chain corresponds to 464–477 (MSQPWYVGPIARHA). The helical transmembrane segment at 478-498 (AGGDVGFELGFAFAAFSYLCL) threads the bilayer. The Cytoplasmic portion of the chain corresponds to 499–508 (RPFEIKFFGR).

It belongs to the purine-cytosine permease (2.A.39) family.

It localises to the cell membrane. Its function is as follows. This permease has a broad specificity towards purines, and also transports cytosine, but neither uracil nor thymine. Contributes very little in purine uptake. Its major role may be the uptake of cytosine. The sequence is that of Purine-cytosine permease fcyB (fcyB) from Emericella nidulans (strain FGSC A4 / ATCC 38163 / CBS 112.46 / NRRL 194 / M139) (Aspergillus nidulans).